A 167-amino-acid chain; its full sequence is Probable glutathione peroxidase 8 (167 aa).

Cys-41 is a catalytic residue.

The protein belongs to the glutathione peroxidase family.

The catalysed reaction is 2 glutathione + H2O2 = glutathione disulfide + 2 H2O. In terms of biological role, may constitute a glutathione peroxidase-like protective system against oxidative stresses. The polypeptide is Probable glutathione peroxidase 8 (GPX8) (Arabidopsis thaliana (Mouse-ear cress)).